Here is a 517-residue protein sequence, read N- to C-terminus: ATP synthase subunit beta (517 aa).

An ATP-binding site is contributed by 167 to 174 (GGAGVGKT). 2 stretches are compositionally biased toward basic and acidic residues: residues 475 to 484 (AESMGAKMDD) and 495 to 508 (DSKD…KADD). Residues 475 to 517 (AESMGAKMDDGGSDGAPPPSDSKDKGKGDSKADDKGDDADKDA) are disordered.

The protein belongs to the ATPase alpha/beta chains family. F-type ATPases have 2 components, CF(1) - the catalytic core - and CF(0) - the membrane proton channel. CF(1) has five subunits: alpha(3), beta(3), gamma(1), delta(1), epsilon(1). CF(0) has three main subunits: a(1), b(2) and c(9-12). The alpha and beta chains form an alternating ring which encloses part of the gamma chain. CF(1) is attached to CF(0) by a central stalk formed by the gamma and epsilon chains, while a peripheral stalk is formed by the delta and b chains.

It is found in the cell membrane. The catalysed reaction is ATP + H2O + 4 H(+)(in) = ADP + phosphate + 5 H(+)(out). Its function is as follows. Produces ATP from ADP in the presence of a proton gradient across the membrane. The catalytic sites are hosted primarily by the beta subunits. The protein is ATP synthase subunit beta of Mycobacterium sp. (strain JLS).